The following is a 150-amino-acid chain: FAD synthase (150 aa).

ATP contacts are provided by residues 16–17, 21–24, and Asp-102; these read VF and HVGH.

The protein belongs to the archaeal FAD synthase family. Homodimer. It depends on a divalent metal cation as a cofactor.

It carries out the reaction FMN + ATP + H(+) = FAD + diphosphate. The protein operates within cofactor biosynthesis; FAD biosynthesis; FAD from FMN: step 1/1. In terms of biological role, catalyzes the transfer of the AMP portion of ATP to flavin mononucleotide (FMN) to produce flavin adenine dinucleotide (FAD) coenzyme. In Thermococcus onnurineus (strain NA1), this protein is FAD synthase.